The primary structure comprises 190 residues: Adenine phosphoribosyltransferase (190 aa).

This sequence belongs to the purine/pyrimidine phosphoribosyltransferase family. In terms of assembly, homodimer.

The protein localises to the cytoplasm. The enzyme catalyses AMP + diphosphate = 5-phospho-alpha-D-ribose 1-diphosphate + adenine. It functions in the pathway purine metabolism; AMP biosynthesis via salvage pathway; AMP from adenine: step 1/1. In terms of biological role, catalyzes a salvage reaction resulting in the formation of AMP, that is energically less costly than de novo synthesis. The polypeptide is Adenine phosphoribosyltransferase (Treponema pallidum (strain Nichols)).